Reading from the N-terminus, the 152-residue chain is Transmembrane protein 35B (152 aa).

The signal sequence occupies residues 1–21 (MLVSLGALRVLLGIFFTLTGA). Helical transmembrane passes span 62-82 (AAVG…PPVL), 85-105 (ISNV…VVLE), and 111-131 (YIPA…QFLV).

Belongs to the DoxX family.

It is found in the membrane. The polypeptide is Transmembrane protein 35B (Rattus norvegicus (Rat)).